Here is a 396-residue protein sequence, read N- to C-terminus: MAKEKFERTKPHVNVGTIGHVDHGKTTLTAAIATVLSAKFGGEAKKYDEIDAAPEEKARGITINTAHIEYETANRHYAHVDCPGHADYVKNMITGAAQMDGAILVCSAADGPMPQTREHILLARQVGVPYIIVFLNKCDMVDDAELLELVEMEVRELLSKYDFPGDDTPIIKGSAKLALEGDKGELGEVAIMNLADALDTYIPTPERAVDGAFLMPVEDVFSISGRGTVVTGRVERGVIKVGEEIEIVGIKATAKTTCTGVEMFRKLLDQGQAGDNVGILLRGTKREDVERGQVLAKPGSITPHTHFTAEVYVLSKDEGGRHTPFFNNYRPQFYFRTTDVTGSIELPKDKEMVMPGDNVSITVKLIAPIAMEEGLRFAIREGGRTVGAGVVAKIIE.

Positions Lys-10–Glu-206 constitute a tr-type G domain. A G1 region spans residues Gly-19–Thr-26. Gly-19–Thr-26 provides a ligand contact to GTP. Thr-26 contacts Mg(2+). The tract at residues Gly-60–Asn-64 is G2. A G3 region spans residues Asp-81–Gly-84. GTP contacts are provided by residues Asp-81–His-85 and Asn-136–Asp-139. Residues Asn-136–Asp-139 are G4. The G5 stretch occupies residues Ser-174–Lys-176.

The protein belongs to the TRAFAC class translation factor GTPase superfamily. Classic translation factor GTPase family. EF-Tu/EF-1A subfamily. Monomer.

The protein resides in the cytoplasm. The catalysed reaction is GTP + H2O = GDP + phosphate + H(+). GTP hydrolase that promotes the GTP-dependent binding of aminoacyl-tRNA to the A-site of ribosomes during protein biosynthesis. The polypeptide is Elongation factor Tu (Burkholderia mallei (strain NCTC 10247)).